Reading from the N-terminus, the 120-residue chain is Small ribosomal subunit protein bS6 (120 aa).

Positions 93–120 are disordered; sequence KKADTAPSSMMKTVEREEARKASQTEQA. Positions 105–120 are enriched in basic and acidic residues; the sequence is TVEREEARKASQTEQA.

It belongs to the bacterial ribosomal protein bS6 family.

Binds together with bS18 to 16S ribosomal RNA. The chain is Small ribosomal subunit protein bS6 from Delftia acidovorans (strain DSM 14801 / SPH-1).